The primary structure comprises 498 residues: 3-octaprenyl-4-hydroxybenzoate carboxy-lyase (498 aa).

Mn(2+) is bound at residue N175. Prenylated FMN is bound by residues 178–180, 192–194, and 197–198; these read IYR, RWL, and RG. E241 serves as a coordination point for Mn(2+). D290 functions as the Proton donor in the catalytic mechanism.

Belongs to the UbiD family. In terms of assembly, homohexamer. Prenylated FMN is required as a cofactor. Mn(2+) serves as cofactor.

It localises to the cell membrane. It catalyses the reaction a 4-hydroxy-3-(all-trans-polyprenyl)benzoate + H(+) = a 2-(all-trans-polyprenyl)phenol + CO2. Its pathway is cofactor biosynthesis; ubiquinone biosynthesis. Functionally, catalyzes the decarboxylation of 3-octaprenyl-4-hydroxy benzoate to 2-octaprenylphenol, an intermediate step in ubiquinone biosynthesis. The polypeptide is 3-octaprenyl-4-hydroxybenzoate carboxy-lyase (Yersinia pseudotuberculosis serotype I (strain IP32953)).